The sequence spans 328 residues: Ornithine transcarbamylase, mitochondrial (328 aa).

The transit peptide at 1-6 directs the protein to the mitochondrion; the sequence is GGQPLQ. Position 44 is an N6-acetyllysine; alternate (Lys-44). Lys-44 carries the N6-succinyllysine; alternate modification. N6-succinyllysine is present on Lys-54. Position 62 is an N6-acetyllysine; alternate (Lys-62). Residue Lys-62 is modified to N6-succinyllysine; alternate. A carbamoyl phosphate-binding site is contributed by 64–68; sequence STRTR. Residue Ser-107 is modified to Phosphoserine. Position 115 (Arg-115) interacts with carbamoyl phosphate. L-ornithine is bound at residue Arg-115. At Lys-118 the chain carries N6-acetyllysine; alternate. Position 118 is an N6-succinyllysine; alternate (Lys-118). His-142 contributes to the carbamoyl phosphate binding site. Asn-173 provides a ligand contact to L-ornithine. An N6-acetyllysine; alternate mark is found at Lys-195, Lys-205, and Lys-212. Residues Lys-195, Lys-205, and Lys-212 each carry the N6-succinyllysine; alternate modification. Residue 237–241 participates in L-ornithine binding; it reads DTWIS. An N6-succinyllysine mark is found at Lys-248 and Lys-263. Residue 276-279 coordinates L-ornithine; the sequence is HCLP. The active site involves Cys-277. Lys-281 is subject to N6-acetyllysine; alternate. Position 281 is an N6-succinyllysine; alternate (Lys-281). Carbamoyl phosphate is bound at residue Arg-304. Arg-304 contacts L-ornithine.

Belongs to the aspartate/ornithine carbamoyltransferase superfamily. OTCase family. As to quaternary structure, homotrimer. Post-translationally, acetylation at Lys-62 negatively regulates ornithine carbamoyltransferase activity in response to nutrient signals.

The protein localises to the mitochondrion matrix. It catalyses the reaction carbamoyl phosphate + L-ornithine = L-citrulline + phosphate + H(+). The protein operates within nitrogen metabolism; urea cycle; L-citrulline from L-ornithine and carbamoyl phosphate: step 1/1. Negatively regulated by lysine acetylation. Its function is as follows. Catalyzes the second step of the urea cycle, the condensation of carbamoyl phosphate with L-ornithine to form L-citrulline. The urea cycle ensures the detoxification of ammonia by converting it to urea for excretion. The sequence is that of Ornithine transcarbamylase, mitochondrial from Sus scrofa (Pig).